A 213-amino-acid polypeptide reads, in one-letter code: Small ribosomal subunit protein uS4 (213 aa).

Positions 16-53 (GTDLGLKSGVKPYDVKTKKSARPPGQHGVSRNKSSEYS) are disordered. A compositionally biased stretch (polar residues) spans 44–53 (VSRNKSSEYS). The S4 RNA-binding domain maps to 97 to 163 (SRLDNVVYRM…EKSREQLRIK (67 aa)).

Belongs to the universal ribosomal protein uS4 family. As to quaternary structure, part of the 30S ribosomal subunit. Contacts protein S5. The interaction surface between S4 and S5 is involved in control of translational fidelity.

One of the primary rRNA binding proteins, it binds directly to 16S rRNA where it nucleates assembly of the body of the 30S subunit. Functionally, with S5 and S12 plays an important role in translational accuracy. This Psychrobacter cryohalolentis (strain ATCC BAA-1226 / DSM 17306 / VKM B-2378 / K5) protein is Small ribosomal subunit protein uS4.